Reading from the N-terminus, the 669-residue chain is Putative transcription factor SOX-14 (669 aa).

The span at 1-12 (MIAKPNQATTEP) shows a compositional bias: polar residues. Disordered stretches follow at residues 1–149 (MIAK…EMTL), 254–336 (YKYR…PKYE), and 419–439 (SSLT…MDNI). A compositionally biased stretch (low complexity) spans 17 to 37 (RPGTVPTVPATTPARPATITI). Residues 52-71 (TLPPFSPSPSPASSPSPAPA) are compositionally biased toward pro residues. The span at 75-84 (GAQKTQSQAA) shows a compositional bias: polar residues. The span at 88 to 105 (PAAVASPSAPVAAAAPKT) shows a compositional bias: low complexity. Over residues 130 to 145 (RESEMDGERSPSHSGH) the composition is skewed to basic and acidic residues. The segment at residues 187 to 255 (IKRPMNAFMV…LHMIEYPNYK (69 aa)) is a DNA-binding region (HMG box). Residues 284-294 (TTNNNNSLTTL) show a composition bias toward low complexity. The span at 295 to 318 (AINGTTTAGRKSKRSTSTCQSGSA) shows a compositional bias: polar residues. The span at 322 to 336 (LRNDSGDTSSKPKYE) shows a compositional bias: basic and acidic residues. Residues 419 to 431 (SSLTQSQHNQSDP) show a composition bias toward polar residues.

The protein localises to the nucleus. This Drosophila melanogaster (Fruit fly) protein is Putative transcription factor SOX-14 (Sox14).